Consider the following 453-residue polypeptide: Charged multivesicular body protein 7 (453 aa).

The disordered stretch occupies residues 1 to 22; sequence MWSPEREAEAPAGGDPAGLLPP. Residues 10–22 show a composition bias toward low complexity; it reads APAGGDPAGLLPP. Residue S232 is modified to Phosphoserine. The stretch at 243-312 forms a coiled coil; sequence QLMQSEQLLS…DTVQGILDRI (70 aa). Basic and acidic residues predominate over residues 392-403; sequence TKEPLDLPDNPR. 2 disordered regions span residues 392–417 and 431–453; these read TKEPLDLPDNPRNRHFTNSVPNPRIS and SEGGLVPSSKSPKRQLEPTLKPL. T408 is subject to Phosphothreonine. Phosphoserine is present on residues S410, S417, S431, and S441.

Belongs to the SNF7 family. Interacts with CHMP4B, but not with VPS25. Interacts with LEMD2 (via C-terminus).

It localises to the cytoplasm. Its subcellular location is the nucleus envelope. Functionally, ESCRT-III-like protein required to recruit the ESCRT-III complex to the nuclear envelope (NE) during late anaphase. Together with SPAST, the ESCRT-III complex promotes NE sealing and mitotic spindle disassembly during late anaphase. Recruited to the reforming NE during anaphase by LEMD2. Plays a role in the endosomal sorting pathway. The sequence is that of Charged multivesicular body protein 7 (CHMP7) from Homo sapiens (Human).